A 129-amino-acid chain; its full sequence is Processing of GAS1 and ALP protein 2 (129 aa).

The residue at position 2 (S2) is an N-acetylserine. A helical membrane pass occupies residues 23-42 (HFIRLVIIVGGYLLLRNIAS). The stretch at 43–116 (RELAKKQLAA…EAKRRNQGLD (74 aa)) forms a coiled coil. 2 disordered regions span residues 53 to 92 (QVEK…KTRR) and 106 to 129 (EEAK…LLEE). Over residues 54-75 (VEKDKRDKEEKRSKDLIDKPDD) the composition is skewed to basic and acidic residues. Residues 117–129 (PDSDADIEELLEE) show a composition bias toward acidic residues. S119 bears the Phosphoserine mark.

The protein belongs to the PGA2 family.

It localises to the endoplasmic reticulum membrane. The protein resides in the nucleus membrane. Involved in the processing and trafficking of GAS1 and PHO8 glycosylated proteins. This chain is Processing of GAS1 and ALP protein 2 (PGA2), found in Saccharomyces cerevisiae (strain ATCC 204508 / S288c) (Baker's yeast).